Reading from the N-terminus, the 191-residue chain is Glutathione S-transferase Y-2 (191 aa).

Positions 2-80 (TFATVYIKPH…YIVAKGSKPE (79 aa)) constitute a GST N-terminal domain. In terms of domain architecture, GST C-terminal spans 85 to 191 (TTEERATNTR…VSQHPIIKNM (107 aa)).

The protein belongs to the GST superfamily.

It carries out the reaction RX + glutathione = an S-substituted glutathione + a halide anion + H(+). In terms of biological role, conjugation of reduced glutathione to a wide number of exogenous and endogenous hydrophobic electrophiles. This chain is Glutathione S-transferase Y-2 (GSTY2), found in Pichia kudriavzevii (Yeast).